The following is a 3753-amino-acid chain: Intermembrane lipid transfer protein VPS13C (3753 aa).

Positions Leu-3–Ser-116 constitute a Chorein N-terminal domain. Position 132 is a phosphoserine (Ser-132). Positions Gly-150–Phe-164 are enriched in basic residues. The disordered stretch occupies residues Gly-150–Glu-176. A compositionally biased stretch (basic and acidic residues) spans Lys-165–Glu-176. Residue Thr-614 is modified to Phosphothreonine. Ser-619 carries the post-translational modification Phosphoserine. Phosphothreonine is present on Thr-624. Phosphoserine is present on residues Ser-737, Ser-842, Ser-872, and Ser-874. The FFAT motif lies at Glu-877–Asp-883. A phosphoserine mark is found at Ser-1979 and Ser-2473. The required for late endosome/lysosome localization stretch occupies residues Asp-2415 to Ala-3309. One can recognise an SHR-BD domain in the interval Leu-2766 to Gly-3016. Residues Glu-3310–Ser-3753 are required for lipid droplet localization. Omega-N-methylarginine is present on residues Arg-3519 and Arg-3526. Lys-3538 carries the N6-acetyllysine modification. Ser-3641 is modified (phosphoserine).

The protein belongs to the VPS13 family. In terms of tissue distribution, widely expressed.

Its subcellular location is the mitochondrion outer membrane. It is found in the lipid droplet. The protein localises to the endoplasmic reticulum membrane. The protein resides in the lysosome membrane. It localises to the late endosome membrane. In terms of biological role, mediates the transfer of lipids between membranes at organelle contact sites. Necessary for proper mitochondrial function and maintenance of mitochondrial transmembrane potential. Involved in the regulation of PINK1/PRKN-mediated mitophagy in response to mitochondrial depolarization. The protein is Intermembrane lipid transfer protein VPS13C of Homo sapiens (Human).